The chain runs to 237 residues: Leucyl/phenylalanyl-tRNA--protein transferase (237 aa).

The protein belongs to the L/F-transferase family.

The protein resides in the cytoplasm. It catalyses the reaction N-terminal L-lysyl-[protein] + L-leucyl-tRNA(Leu) = N-terminal L-leucyl-L-lysyl-[protein] + tRNA(Leu) + H(+). The catalysed reaction is N-terminal L-arginyl-[protein] + L-leucyl-tRNA(Leu) = N-terminal L-leucyl-L-arginyl-[protein] + tRNA(Leu) + H(+). It carries out the reaction L-phenylalanyl-tRNA(Phe) + an N-terminal L-alpha-aminoacyl-[protein] = an N-terminal L-phenylalanyl-L-alpha-aminoacyl-[protein] + tRNA(Phe). Its function is as follows. Functions in the N-end rule pathway of protein degradation where it conjugates Leu, Phe and, less efficiently, Met from aminoacyl-tRNAs to the N-termini of proteins containing an N-terminal arginine or lysine. This Aromatoleum aromaticum (strain DSM 19018 / LMG 30748 / EbN1) (Azoarcus sp. (strain EbN1)) protein is Leucyl/phenylalanyl-tRNA--protein transferase.